The primary structure comprises 247 residues: Adenosylcobinamide-GDP ribazoletransferase (247 aa).

5 helical membrane passes run 34 to 54, 59 to 79, 113 to 133, 138 to 158, and 194 to 214; these read IITF…VFMV, CGVP…TGGF, GGLA…ELAL, ILAS…LLMY, and VLLP…AIFI.

Belongs to the CobS family. It depends on Mg(2+) as a cofactor.

It localises to the cell inner membrane. It catalyses the reaction alpha-ribazole + adenosylcob(III)inamide-GDP = adenosylcob(III)alamin + GMP + H(+). It carries out the reaction alpha-ribazole 5'-phosphate + adenosylcob(III)inamide-GDP = adenosylcob(III)alamin 5'-phosphate + GMP + H(+). Its pathway is cofactor biosynthesis; adenosylcobalamin biosynthesis; adenosylcobalamin from cob(II)yrinate a,c-diamide: step 7/7. In terms of biological role, joins adenosylcobinamide-GDP and alpha-ribazole to generate adenosylcobalamin (Ado-cobalamin). Also synthesizes adenosylcobalamin 5'-phosphate from adenosylcobinamide-GDP and alpha-ribazole 5'-phosphate. This chain is Adenosylcobinamide-GDP ribazoletransferase, found in Escherichia coli (strain 55989 / EAEC).